Here is a 192-residue protein sequence, read N- to C-terminus: Glutaredoxin-C9 (192 aa).

Positions 89–191 constitute a Glutaredoxin domain; sequence YERVARMASG…PLLKQAGALW (103 aa). A disulfide bond links Cys109 and Cys112. Residues 189–192 carry the Responsive for interaction with TGA factors motif; sequence ALWL.

Belongs to the glutaredoxin family. CC-type subfamily.

Its subcellular location is the cytoplasm. The protein resides in the nucleus. In terms of biological role, has a glutathione-disulfide oxidoreductase activity in the presence of NADPH and glutathione reductase. Reduces low molecular weight disulfides and proteins. The polypeptide is Glutaredoxin-C9 (GRXC9) (Oryza sativa subsp. japonica (Rice)).